The primary structure comprises 534 residues: Beta-glucosidase 31 (534 aa).

The first 22 residues, Met1–Gly22, serve as a signal peptide directing secretion. Gln51 provides a ligand contact to a beta-D-glucoside. N-linked (GlcNAc...) asparagine glycosylation is present at Asn68. A beta-D-glucoside-binding positions include His154 and Asn199–Glu200. Catalysis depends on Glu200, which acts as the Proton donor. Cys219 and Cys227 are joined by a disulfide. Tyr344 provides a ligand contact to a beta-D-glucoside. Residue Asn374 is glycosylated (N-linked (GlcNAc...) asparagine). Glu417 lines the a beta-D-glucoside pocket. Glu417 acts as the Nucleophile in catalysis. Asn425 carries an N-linked (GlcNAc...) asparagine glycan. A beta-D-glucoside is bound by residues Trp467, Glu474 to Trp475, and Phe483.

This sequence belongs to the glycosyl hydrolase 1 family.

It carries out the reaction Hydrolysis of terminal, non-reducing beta-D-glucosyl residues with release of beta-D-glucose.. The polypeptide is Beta-glucosidase 31 (Arabidopsis thaliana (Mouse-ear cress)).